Reading from the N-terminus, the 758-residue chain is 5-methyltetrahydropteroyltriglutamate--homocysteine methyltransferase (758 aa).

Residues 17–20 and K117 contribute to the 5-methyltetrahydropteroyltri-L-glutamate site; that span reads RELK. L-homocysteine is bound by residues 434-436 and E487; that span reads IGS. L-methionine-binding positions include 434-436 and E487; that span reads IGS. 5-methyltetrahydropteroyltri-L-glutamate-binding positions include 518-519 and W564; that span reads RC. Residue D602 coordinates L-homocysteine. D602 provides a ligand contact to L-methionine. Position 608 (E608) interacts with 5-methyltetrahydropteroyltri-L-glutamate. H644, C646, and E668 together coordinate Zn(2+). Catalysis depends on H697, which acts as the Proton donor. C729 serves as a coordination point for Zn(2+).

Belongs to the vitamin-B12 independent methionine synthase family. Zn(2+) serves as cofactor.

The catalysed reaction is 5-methyltetrahydropteroyltri-L-glutamate + L-homocysteine = tetrahydropteroyltri-L-glutamate + L-methionine. It participates in amino-acid biosynthesis; L-methionine biosynthesis via de novo pathway; L-methionine from L-homocysteine (MetE route): step 1/1. In terms of biological role, catalyzes the transfer of a methyl group from 5-methyltetrahydrofolate to homocysteine resulting in methionine formation. In Yersinia pestis bv. Antiqua (strain Antiqua), this protein is 5-methyltetrahydropteroyltriglutamate--homocysteine methyltransferase.